The following is a 48-amino-acid chain: MARFPEAEARLLNVKICMHCNARNPVRAVSCRKCGYVHLRPKNKDRKA.

Belongs to the eukaryotic ribosomal protein eL40 family.

This is Large ribosomal subunit protein eL40 from Methanospirillum hungatei JF-1 (strain ATCC 27890 / DSM 864 / NBRC 100397 / JF-1).